The primary structure comprises 357 residues: Sorbitol dehydrogenase 1 (357 aa).

Cys-43 serves as a coordination point for Zn(2+). Tyr-49 lines the substrate pocket. 2 residues coordinate Zn(2+): His-68 and Glu-69. Glu-154 contributes to the substrate binding site. Residues Asp-202, Lys-207, 275-277, and 299-301 each bind NAD(+); these read VGM and CFR. Substrate-binding residues include Arg-301 and Tyr-302.

It belongs to the zinc-containing alcohol dehydrogenase family. Homotetramer. It depends on Zn(2+) as a cofactor.

It carries out the reaction keto-D-fructose + NADH + H(+) = D-sorbitol + NAD(+). It catalyses the reaction xylitol + NAD(+) = D-xylulose + NADH + H(+). Functionally, polyol dehydrogenase that catalyzes the reversible NAD(+)-dependent oxidation of various sugar alcohols. Is active with D-sorbitol (D-glucitol) and xylitol as substrates, leading to the C2-oxidized product D-fructose and D-xylulose, respectively. Is likely involved in the utilization of D-sorbitol as a sole carbon source for growth. Has no activity on mannitol and primary alcohols such as ethanol. In Saccharomyces cerevisiae (strain ATCC 204508 / S288c) (Baker's yeast), this protein is Sorbitol dehydrogenase 1 (SOR1).